A 1529-amino-acid polypeptide reads, in one-letter code: uncharacterized protein (1529 aa).

Residues 1 to 11 (MDKNNNNNNSN) are compositionally biased toward low complexity. Disordered regions lie at residues 1 to 85 (MDKN…SKGV), 335 to 371 (LLSNGGGISTSEPEISPSTSPLTGTTPTSPSSSWSSS), 660 to 694 (LPNLTNSISSPSHSSSSSSSTTTNINNSNNNTATA), 798 to 843 (NCNI…SSYS), 1016 to 1035 (SSLPISQNLSDDSSNTNTNN), 1334 to 1364 (QQQQQQPQQQSSQPQQQSSQPQQIPQSQLQQ), and 1454 to 1497 (QQQV…SRLP). Positions 24–42 (QKRVQNPSFSSGQSRTVPS) are enriched in polar residues. Over residues 51 to 79 (ISSSSSSSSISTTNNTTTTTTSGTGSTSS) the composition is skewed to low complexity. The span at 810 to 833 (NNNNNNNNNNNNNNNNNNNNNNNN) shows a compositional bias: low complexity. Polar residues-rich tracts occupy residues 834–843 (VLPRSNSSYS) and 1016–1027 (SSLPISQNLSDD). Low complexity predominate over residues 1454–1494 (QQQVQTPSSPQTLASLLGNSSSNTLTSSSSTLSLNESSTLS).

This is an uncharacterized protein from Dictyostelium discoideum (Social amoeba).